The sequence spans 333 residues: (2R)-3-sulfolactate dehydrogenase (NADP(+)) (333 aa).

This sequence belongs to the LDH2/MDH2 oxidoreductase family.

It carries out the reaction (2R)-3-sulfolactate + NADP(+) = 3-sulfopyruvate + NADPH + H(+). In terms of biological role, catalyzes the reduction of sulfopyruvate to (R)-sulfolactate. Together with SlcC, provides a racemase system that converts (2S)-3-sulfolactate to (2R)-3-sulfolactate, which is degraded further by (2R)-sulfolactate sulfo-lyase. This Chromohalobacter salexigens (strain ATCC BAA-138 / DSM 3043 / CIP 106854 / NCIMB 13768 / 1H11) protein is (2R)-3-sulfolactate dehydrogenase (NADP(+)) (comC).